Reading from the N-terminus, the 362-residue chain is Manganese peroxidase 3 (362 aa).

A signal peptide spans 1-18 (MAFKQLLTAISIVSVANA). The propeptide occupies 19-23 (ALTRR). Disulfide bonds link C26-C39, C38-C309, C58-C144, and C273-C338. Residues E60 and E64 each contribute to the Mn(2+) site. H71 serves as the catalytic Proton acceptor. Ca(2+) contacts are provided by D72, G90, D92, and S94. The N-linked (GlcNAc...) asparagine glycan is linked to N126. H200 contributes to the heme b binding site. T201 provides a ligand contact to Ca(2+). Residue D206 coordinates Mn(2+). Ca(2+) is bound by residues D218, T220, I223, and D225. Residues 341–362 (TPFPSLSADPGPATSVAPVPPS) are disordered.

The protein belongs to the peroxidase family. Ligninase subfamily. The cofactor is heme b. Requires Ca(2+) as cofactor.

Its subcellular location is the secreted. It carries out the reaction 2 Mn(2+) + H2O2 + 2 H(+) = 2 Mn(3+) + 2 H2O. Catalyzes the oxidation of Mn(2+) to Mn(3+). The latter, acting as a diffusible redox mediator, is capable of oxidizing a variety of lignin compounds. This isozyme is also able to oxidize phenols and amines in the absence of Mn(2+), similar to versatile peroxidases. The polypeptide is Manganese peroxidase 3 (mnp3) (Phlebia radiata (White-rot fungus)).